A 343-amino-acid polypeptide reads, in one-letter code: Anthranilate phosphoribosyltransferase (343 aa).

Residues G85, 88 to 89, T93, 95 to 98, 113 to 121, and A125 each bind 5-phospho-alpha-D-ribose 1-diphosphate; these read GD, NIST, and KHGGRSVSS. G85 provides a ligand contact to anthranilate. S97 contacts Mg(2+). An anthranilate-binding site is contributed by R171. Mg(2+)-binding residues include D230 and E231.

This sequence belongs to the anthranilate phosphoribosyltransferase family. Homodimer. The cofactor is Mg(2+).

It carries out the reaction N-(5-phospho-beta-D-ribosyl)anthranilate + diphosphate = 5-phospho-alpha-D-ribose 1-diphosphate + anthranilate. The protein operates within amino-acid biosynthesis; L-tryptophan biosynthesis; L-tryptophan from chorismate: step 2/5. Catalyzes the transfer of the phosphoribosyl group of 5-phosphorylribose-1-pyrophosphate (PRPP) to anthranilate to yield N-(5'-phosphoribosyl)-anthranilate (PRA). The protein is Anthranilate phosphoribosyltransferase of Aromatoleum aromaticum (strain DSM 19018 / LMG 30748 / EbN1) (Azoarcus sp. (strain EbN1)).